The chain runs to 402 residues: Acetate kinase (402 aa).

Asn13 contributes to the Mg(2+) binding site. Residue Lys20 coordinates ATP. Position 94 (Arg94) interacts with substrate. Asp151 (proton donor/acceptor) is an active-site residue. ATP is bound by residues 211 to 215, 285 to 287, and 333 to 337; these read HLGNG, DFR, and GVGEN. Glu387 provides a ligand contact to Mg(2+).

Belongs to the acetokinase family. As to quaternary structure, homodimer. It depends on Mg(2+) as a cofactor. The cofactor is Mn(2+).

It localises to the cytoplasm. The enzyme catalyses acetate + ATP = acetyl phosphate + ADP. Its pathway is metabolic intermediate biosynthesis; acetyl-CoA biosynthesis; acetyl-CoA from acetate: step 1/2. In terms of biological role, catalyzes the formation of acetyl phosphate from acetate and ATP. Can also catalyze the reverse reaction. In Nocardia farcinica (strain IFM 10152), this protein is Acetate kinase.